A 446-amino-acid polypeptide reads, in one-letter code: tRNA-2-methylthio-N(6)-dimethylallyladenosine synthase (446 aa).

An MTTase N-terminal domain is found at 2–122 (KKAYVKSYGC…LPDLLRQSRE (121 aa)). Residues C11, C47, C85, C157, C161, and C164 each coordinate [4Fe-4S] cluster. One can recognise a Radical SAM core domain in the interval 143-375 (RNRGVTGFLT…QQLLDQQRHA (233 aa)). The region spanning 378 to 440 (AAAVGTVAEI…SNSLFGEVLE (63 aa)) is the TRAM domain.

Belongs to the methylthiotransferase family. MiaB subfamily. As to quaternary structure, monomer. It depends on [4Fe-4S] cluster as a cofactor.

Its subcellular location is the cytoplasm. It catalyses the reaction N(6)-dimethylallyladenosine(37) in tRNA + (sulfur carrier)-SH + AH2 + 2 S-adenosyl-L-methionine = 2-methylsulfanyl-N(6)-dimethylallyladenosine(37) in tRNA + (sulfur carrier)-H + 5'-deoxyadenosine + L-methionine + A + S-adenosyl-L-homocysteine + 2 H(+). Functionally, catalyzes the methylthiolation of N6-(dimethylallyl)adenosine (i(6)A), leading to the formation of 2-methylthio-N6-(dimethylallyl)adenosine (ms(2)i(6)A) at position 37 in tRNAs that read codons beginning with uridine. The protein is tRNA-2-methylthio-N(6)-dimethylallyladenosine synthase of Methylorubrum populi (strain ATCC BAA-705 / NCIMB 13946 / BJ001) (Methylobacterium populi).